The sequence spans 121 residues: Small ribosomal subunit protein uS13 (121 aa).

A disordered region spans residues 97–121; that stretch reads VRGQRTRTNARTRRGARKTVAGKKK. The segment covering 100-121 has biased composition (basic residues); the sequence is QRTRTNARTRRGARKTVAGKKK.

It belongs to the universal ribosomal protein uS13 family. As to quaternary structure, part of the 30S ribosomal subunit. Forms a loose heterodimer with protein S19. Forms two bridges to the 50S subunit in the 70S ribosome.

Its function is as follows. Located at the top of the head of the 30S subunit, it contacts several helices of the 16S rRNA. In the 70S ribosome it contacts the 23S rRNA (bridge B1a) and protein L5 of the 50S subunit (bridge B1b), connecting the 2 subunits; these bridges are implicated in subunit movement. Contacts the tRNAs in the A and P-sites. The sequence is that of Small ribosomal subunit protein uS13 from Prochlorococcus marinus (strain MIT 9313).